A 152-amino-acid chain; its full sequence is Dimethylsulfoniopropionate lyase DddW (152 aa).

The Cupin type-2 domain maps to 69-124 (IAEFGPGHQLRPHRHTPPEFYLGLEGSGIVTIDGVPHEIRAGVALYIPGDAEHGTV). His83, Glu87, Tyr89, and His121 together coordinate Fe cation.

This sequence belongs to the non-heme iron-dependent dioxygenase family. In terms of assembly, homodimer. It depends on Fe(2+) as a cofactor.

The catalysed reaction is S,S-dimethyl-beta-propiothetin = acrylate + dimethyl sulfide + H(+). Able to cleave dimethylsulfoniopropionate (DMSP), releasing dimethyl sulfide (DMS) and acrylate. DMS is the principal form by which sulfur is transported from oceans to the atmosphere. This Ruegeria pomeroyi (strain ATCC 700808 / DSM 15171 / DSS-3) (Silicibacter pomeroyi) protein is Dimethylsulfoniopropionate lyase DddW.